Consider the following 485-residue polypeptide: Sodium-coupled neutral amino acid symporter 1 (485 aa).

At 1 to 74 (MMHFKSGLEL…EYIPGTTSLG (74 aa)) the chain is on the cytoplasmic side. Ser-6 carries the phosphoserine modification. Thr-11 is modified (phosphothreonine). Residues Ser-25, Ser-28, Ser-49, and Ser-52 each carry the phosphoserine modification. Thr-54 carries the post-translational modification Phosphothreonine. At Ser-56 the chain carries Phosphoserine. Residues 75–97 (MSVFNLSNAIMGSGILGLAFALA) traverse the membrane as a helical segment. Residues 98 to 112 (NTGILLFLILLTSVT) lie on the Extracellular side of the membrane. A helical transmembrane segment spans residues 113–133 (LLSIYSINLLLICSKETGCMV). At 134–148 (YEKLGEQVFGTTGKL) the chain is on the cytoplasmic side. Residues 149-169 (VIFGATSLQNTGAMLSYLFIV) form a helical membrane-spanning segment. The Extracellular segment spans residues 170-188 (KNELPSAIKSLMGEEETFS). The chain crosses the membrane as a helical span at residues 189–211 (AWYVDGRVLVVMVTFGIILPLCL). Residues 212-216 (LKNLG) are Cytoplasmic-facing. The chain crosses the membrane as a helical span at residues 217 to 237 (YLGYTSGFSLSCMVFFLIVVI). At 238–273 (YKKFQIPCMNGEQNSTVSANVTDACTPKYVTFNSKT) the chain is on the extracellular side. Cys-245 and Cys-262 are oxidised to a cystine. N-linked (GlcNAc...) asparagine glycans are attached at residues Asn-251 and Asn-257. A helical transmembrane segment spans residues 274–294 (VYALPTIAFAFVCHPSVLPIY). Over 295–310 (SELKDRSQKKMQMVSN) the chain is Cytoplasmic. A helical transmembrane segment spans residues 311–331 (ISFFAMFVMYFLTAIFGYLTF). Residues 332–348 (YEKVQSDLLHKYQSTGD) are Extracellular-facing. Residues 349–369 (ILILTVRLAVIVAVILTVPVL) traverse the membrane as a helical segment. Topologically, residues 370–391 (FFTVRSSLFELAKKTKFHLCRH) are cytoplasmic. Residues 392–412 (VLVTIILLVIINLLVIFIPSM) form a helical membrane-spanning segment. Over 413 to 414 (KD) the chain is Extracellular. A helical membrane pass occupies residues 415–435 (IFGVVGVTSANMLIFILPSSL). The Cytoplasmic portion of the chain corresponds to 436–450 (YLKITNQDGDKNTQR). The chain crosses the membrane as a helical span at residues 451–471 (IWAALFLALGVLFSLISIPLV). Residues 472-485 (IYDWACSSSNGEGH) lie on the Extracellular side of the membrane.

It belongs to the amino acid/polyamine transporter 2 family. Post-translationally, N-glycosylation plays an important role in the L-glutamine transport. In terms of tissue distribution, specifically expressed in brain with the highest levels in cerebellum and thalamus (at protein level). Expressed in glutamatergic, GABAergic and a subset of dopaminergic neurons of the substantia nigra and cholinergic motoneurons (at protein level). Also expressed by ependymal cells lining the ventricle (at protein level). Expression is also detected in spinal cord, heart, colon and placenta.

It is found in the cell membrane. It carries out the reaction L-glutamine(in) + Na(+)(in) = L-glutamine(out) + Na(+)(out). The catalysed reaction is L-alanine(in) + Na(+)(in) = L-alanine(out) + Na(+)(out). The enzyme catalyses L-asparagine(in) + Na(+)(in) = L-asparagine(out) + Na(+)(out). It catalyses the reaction L-histidine(in) + Na(+)(in) = L-histidine(out) + Na(+)(out). It carries out the reaction L-serine(in) + Na(+)(in) = L-serine(out) + Na(+)(out). The catalysed reaction is L-cysteine(in) + Na(+)(in) = L-cysteine(out) + Na(+)(out). The enzyme catalyses L-methionine(in) + Na(+)(in) = L-methionine(out) + Na(+)(out). It catalyses the reaction glycine(in) + Na(+)(in) = glycine(out) + Na(+)(out). It carries out the reaction L-threonine(in) + Na(+)(in) = L-threonine(out) + Na(+)(out). The catalysed reaction is L-proline(in) + Na(+)(in) = L-proline(out) + Na(+)(out). Inhibited by alpha-(methylamino)isobutyric acid (MeAIB). Inhibited by lithium, potassium, choline ions, N-methylglucamine. The pH dependence has an allosteric effect on the transport. Symporter that cotransports short-chain neutral amino acids and sodium ions from the extraccellular to the intracellular side of the cell membrane. The transport is elctrogenic, pH dependent and driven by the Na(+) electrochemical gradient. Participates in the astroglia-derived glutamine transport into GABAergic interneurons for neurotransmitter GABA de novo synthesis. May also contributes to amino acid transport in placental trophoblast. Regulates synaptic plasticity. In Rattus norvegicus (Rat), this protein is Sodium-coupled neutral amino acid symporter 1.